The chain runs to 92 residues: Large ribosomal subunit protein eL34 (92 aa).

Belongs to the eukaryotic ribosomal protein eL34 family.

The protein is Large ribosomal subunit protein eL34 of Staphylothermus marinus (strain ATCC 43588 / DSM 3639 / JCM 9404 / F1).